Here is an 811-residue protein sequence, read N- to C-terminus: Vacuolar protein sorting-associated protein 70 (811 aa).

Basic and acidic residues predominate over residues 1-21 (MRMIQRERKREKEEGQLKERT). The tract at residues 1–63 (MRMIQRERKR…MNDSFTLTSR (63 aa)) is disordered. N-linked (GlcNAc...) asparagine glycosylation occurs at N55. The chain crosses the membrane as a helical span at residues 90 to 110 (FMYLILASLLLYMGFVAAFAP). A glycan (N-linked (GlcNAc...) asparagine) is linked at N237. The segment at 334–367 (FSDTPGDPTTPGYPSKDSDTEHMSPVGRVPRIPS) is disordered. Residues 336–345 (DTPGDPTTPG) show a composition bias toward low complexity. The Zn(2+) site is built by H445, D456, and D522. N-linked (GlcNAc...) asparagine glycosylation is found at N568 and N599. Position 607 (H607) interacts with Zn(2+). N670 carries an N-linked (GlcNAc...) asparagine glycan.

Belongs to the peptidase M28 family. M28B subfamily. Zn(2+) is required as a cofactor.

Its subcellular location is the membrane. Functionally, involved in vacuolar protein sorting. This Saccharomyces cerevisiae (strain ATCC 204508 / S288c) (Baker's yeast) protein is Vacuolar protein sorting-associated protein 70 (VPS70).